A 224-amino-acid polypeptide reads, in one-letter code: Ribose-5-phosphate isomerase A (224 aa).

Substrate is bound by residues T32–T35, D85–D88, and K98–G101. E107 serves as the catalytic Proton acceptor. Residue K125 coordinates substrate.

This sequence belongs to the ribose 5-phosphate isomerase family. In terms of assembly, homodimer.

It catalyses the reaction aldehydo-D-ribose 5-phosphate = D-ribulose 5-phosphate. It participates in carbohydrate degradation; pentose phosphate pathway; D-ribose 5-phosphate from D-ribulose 5-phosphate (non-oxidative stage): step 1/1. Functionally, catalyzes the reversible conversion of ribose-5-phosphate to ribulose 5-phosphate. This is Ribose-5-phosphate isomerase A from Pseudomonas fluorescens (strain Pf0-1).